The primary structure comprises 149 residues: Cytochrome c' (149 aa).

Residues Met1 to Ala19 form the signal peptide. Heme c contacts are provided by Arg29, Thr89, Ala90, Cys138, Cys141, and His142.

Monomer and homodimer. Post-translationally, binds 1 heme c group covalently per subunit.

Functionally, cytochrome c' is the most widely occurring bacterial c-type cytochrome. Cytochromes c' are high-spin proteins and the heme has no sixth ligand. Their exact function is not known. This is Cytochrome c' (cycP) from Cereibacter sphaeroides (strain ATCC 17023 / DSM 158 / JCM 6121 / CCUG 31486 / LMG 2827 / NBRC 12203 / NCIMB 8253 / ATH 2.4.1.) (Rhodobacter sphaeroides).